We begin with the raw amino-acid sequence, 181 residues long: Type II secretion system protein H (181 aa).

Residues 1 to 5 (MRQRG) constitute a propeptide, leader sequence. At F6 the chain carries N-methylphenylalanine. The chain crosses the membrane as a helical span at residues 6-29 (FTLLEIMLVVLLAGVAATLVMMAI).

It belongs to the GSP H family. Type II secretion is composed of four main components: the outer membrane complex, the inner membrane complex, the cytoplasmic secretion ATPase and the periplasm-spanning pseudopilus. Interacts with core component OutG. In terms of processing, cleaved by prepilin peptidase. Methylated by prepilin peptidase at the amino group of the N-terminal phenylalanine once the leader sequence is cleaved by prepilin peptidase.

It is found in the cell inner membrane. Component of the type II secretion system required for the energy-dependent secretion of extracellular factors such as proteases and toxins from the periplasm. Part of the pseudopilus tip complex that is critical for the recognition and binding of secretion substrates. The chain is Type II secretion system protein H (outH) from Dickeya chrysanthemi (Pectobacterium chrysanthemi).